The following is a 189-amino-acid chain: MTRIDVIDNHGQFTHLEQRALRDMGVDVSLRDNTTPPEEIDADGIVLSGGPDMDDIGNCPEYLDLDVPVLGICLGMQLIADELGGRVGGGEYGGYADVTVDILDDDDPLLGSLYPETRVWASHADEVKEVPPGFERTATSDVCGVEAMSNTDEAIYGVQWHPEVAHTEEGEEVFENFLSVCDQQSVARQ.

The Glutamine amidotransferase type-1 domain occupies 3 to 187 (RIDVIDNHGQ…LSVCDQQSVA (185 aa)). The active-site Nucleophile is the C73. Active-site residues include H161 and E163.

In terms of assembly, heterodimer composed of a glutamine amidotransferase subunit (A) and a GMP-binding subunit (B).

The catalysed reaction is XMP + L-glutamine + ATP + H2O = GMP + L-glutamate + AMP + diphosphate + 2 H(+). It functions in the pathway purine metabolism; GMP biosynthesis; GMP from XMP (L-Gln route): step 1/1. Catalyzes the synthesis of GMP from XMP. This chain is GMP synthase [glutamine-hydrolyzing] subunit A, found in Haloarcula marismortui (strain ATCC 43049 / DSM 3752 / JCM 8966 / VKM B-1809) (Halobacterium marismortui).